Reading from the N-terminus, the 338-residue chain is Heat-inducible transcription repressor HrcA (338 aa).

The protein belongs to the HrcA family.

In terms of biological role, negative regulator of class I heat shock genes (grpE-dnaK-dnaJ and groELS operons). Prevents heat-shock induction of these operons. The polypeptide is Heat-inducible transcription repressor HrcA (Bacillus thuringiensis (strain Al Hakam)).